Reading from the N-terminus, the 404-residue chain is Tryptophan synthase beta chain (404 aa).

Lysine 98 carries the N6-(pyridoxal phosphate)lysine modification.

This sequence belongs to the TrpB family. In terms of assembly, tetramer of two alpha and two beta chains. Requires pyridoxal 5'-phosphate as cofactor.

The catalysed reaction is (1S,2R)-1-C-(indol-3-yl)glycerol 3-phosphate + L-serine = D-glyceraldehyde 3-phosphate + L-tryptophan + H2O. The protein operates within amino-acid biosynthesis; L-tryptophan biosynthesis; L-tryptophan from chorismate: step 5/5. In terms of biological role, the beta subunit is responsible for the synthesis of L-tryptophan from indole and L-serine. This chain is Tryptophan synthase beta chain, found in Rhodopseudomonas palustris (strain HaA2).